The chain runs to 211 residues: 3-demethoxyubiquinol 3-hydroxylase (211 aa).

Glu-60, Glu-90, His-93, Glu-142, Glu-174, and His-177 together coordinate Fe cation.

Belongs to the COQ7 family. Fe cation serves as cofactor.

The protein localises to the cell membrane. The catalysed reaction is a 5-methoxy-2-methyl-3-(all-trans-polyprenyl)benzene-1,4-diol + AH2 + O2 = a 3-demethylubiquinol + A + H2O. The protein operates within cofactor biosynthesis; ubiquinone biosynthesis. Catalyzes the hydroxylation of 2-nonaprenyl-3-methyl-6-methoxy-1,4-benzoquinol during ubiquinone biosynthesis. The protein is 3-demethoxyubiquinol 3-hydroxylase of Francisella tularensis subsp. holarctica (strain FTNF002-00 / FTA).